The sequence spans 165 residues: Type 3 secretion system regulator YopR (165 aa).

Belongs to the YopR family.

Its subcellular location is the secreted. Its function is as follows. May be involved in the regulation of the assembly of the type III secretion system (T3SS), also called injectisome, which is used to inject bacterial effector proteins into eukaryotic host cells. May control the secretion and/or polymerization of YscF/SctF, the principal component of the needle filament, thereby impacting the assembly of the T3SS. Involved in pathogenesis. The polypeptide is Type 3 secretion system regulator YopR (Yersinia pseudotuberculosis serotype I (strain IP32953)).